Here is a 187-residue protein sequence, read N- to C-terminus: Accessory gene regulator protein B (187 aa).

5 helical membrane passes run 49 to 69 (ISIFLSVFLYTLVTHLSYMLI), 82 to 102 (ILCYIQSILIFVFVPYFLINI), 106 to 126 (FTYLLALSIIGLISVVIYAPA), 144 to 164 (VSIIMYLLVMILSLIIHPFYA), and 166 to 186 (FMLLGILVESITLLPIFFPKE).

The protein belongs to the AgrB family.

Its subcellular location is the cell membrane. Its function is as follows. Essential for the production of a quorum sensing system signal molecule, the autoinducing peptide (AIP). This quorum sensing system is responsible for the regulation of the expression of virulence factor genes. Involved in the proteolytic processing of AgrD, the precursor of AIP. The chain is Accessory gene regulator protein B from Staphylococcus aureus (strain bovine RF122 / ET3-1).